Consider the following 226-residue polypeptide: Small ribosomal subunit protein uS2c (226 aa).

The protein belongs to the universal ribosomal protein uS2 family.

Its subcellular location is the plastid. It localises to the chloroplast. In Ostreococcus tauri, this protein is Small ribosomal subunit protein uS2c (rps2).